A 111-amino-acid chain; its full sequence is Photosystem II reaction center Psb28 protein (111 aa).

It belongs to the Psb28 family. In terms of assembly, part of the photosystem II complex.

Its subcellular location is the cellular thylakoid membrane. The polypeptide is Photosystem II reaction center Psb28 protein (Gloeothece citriformis (strain PCC 7424) (Cyanothece sp. (strain PCC 7424))).